Here is a 146-residue protein sequence, read N- to C-terminus: Ribonuclease H (146 aa).

The RNase H type-1 domain maps to 1–143 (MEKTITIYTD…CDELARLAIK (143 aa)). Mg(2+) contacts are provided by D10, E48, D70, and D135.

The protein belongs to the RNase H family. Monomer. The cofactor is Mg(2+).

It is found in the cytoplasm. The catalysed reaction is Endonucleolytic cleavage to 5'-phosphomonoester.. Its function is as follows. Endonuclease that specifically degrades the RNA of RNA-DNA hybrids. The sequence is that of Ribonuclease H from Chlorobaculum parvum (strain DSM 263 / NCIMB 8327) (Chlorobium vibrioforme subsp. thiosulfatophilum).